The primary structure comprises 442 residues: Phosphatidylserine synthase 2 (442 aa).

The Cytoplasmic segment spans residues 1–40 (MRRGERRGPAGPLGDGPALGLRRSTESEVYDDGTNTFFWR). The chain crosses the membrane as a helical span at residues 41–61 (AHTLTVLFILTCALGYVTLLE). At 62 to 74 (ETPQDTAYNTKRG) the chain is on the lumenal side. A helical membrane pass occupies residues 75 to 95 (IVASILVFLCFGVTQAKDGPF). At 96-104 (SRPHPAYWR) the chain is on the cytoplasmic side. Residues 105 to 125 (FWLCVSVVYELFLIFILFQTV) traverse the membrane as a helical segment. Topologically, residues 126–291 (QDGRQFMKYI…EWKPASSLRR (166 aa)) are lumenal. Asn-159 and Asn-215 each carry an N-linked (GlcNAc...) asparagine glycan. The chain crosses the membrane as a helical span at residues 292–312 (WLAVCGIIFVFLLAELNTFYL). Residue Lys-313 is a topological domain, cytoplasmic. The chain crosses the membrane as a helical span at residues 314–334 (FVLWMPPEHYLVLLRLVFFVN). Residues 335–354 (VGGVAMREIYDFMDDPKFHK) lie on the Lumenal side of the membrane. A helical transmembrane segment spans residues 355-375 (KLGQQAWLVAAITATEFLIVV). At 376-381 (KYDPYT) the chain is on the cytoplasmic side. Residues 382 to 402 (LTLSLPFYITQCWILGIILVL) form a helical membrane-spanning segment. Residues 403–442 (TWTAWRFFIRDITLRYKEIRRQKQEHKYEKDKCLSNGDGH) are Lumenal-facing.

The protein belongs to the phosphatidyl serine synthase family.

It is found in the endoplasmic reticulum membrane. The enzyme catalyses a 1,2-diacyl-sn-glycero-3-phosphoethanolamine + L-serine = a 1,2-diacyl-sn-glycero-3-phospho-L-serine + ethanolamine. It carries out the reaction 1-hexadecanoyl-2-(9Z-octadecenoyl)-sn-glycero-3-phosphoethanolamine + L-serine = 1-hexadecanoyl-2-(9Z-octadecenoyl)-sn-glycero-3-phospho-L-serine + ethanolamine. It catalyses the reaction 1-hexadecanoyl-2-(4Z,7Z,10Z,13Z,16Z,19Z-docosahexaenoyl)-sn-glycero-3-phosphoethanolamine + L-serine = 1-hexadecanoyl-2-(4Z,7Z,10Z,13Z,16Z,19Z-docosahexaenoyl)-sn-glycero-3-phosphoserine + ethanolamine. The catalysed reaction is 1-octadecanoyl-2-(5Z,8Z,11Z,14Z)-eicosatetraenoyl-sn-glycero-3-phosphoethanolamine + L-serine = 1-octadecanoyl-2-(5Z,8Z,11Z,14Z)-eicosatetraenoyl-sn-glycero-3-phosphoserine + ethanolamine. The enzyme catalyses 1-octadecanoyl-2-(4Z,7Z,10Z,13Z,16Z,19Z-docosahexaenoyl)-sn-glycero-3-phosphoethanolamine + L-serine = 1-octadecanoyl-2-(4Z,7Z,10Z,13Z,16Z,19Z-docosahexaenoyl)-sn-glycero-3-phosphoserine + ethanolamine. It carries out the reaction 1-(1Z-octadecenyl)-2-(4Z,7Z,10Z,13Z,16Z,19Z-docosahexaenoyl)-sn-glycero-3-phosphoethanolamine + L-serine = 1-(1Z-octadecenyl)-2-(4Z,7Z,10Z,13Z,16Z,19Z-docosahexaenoyl)-sn-glycero-3-phospho-L-serine + ethanolamine. It catalyses the reaction 1-octadecanoyl-2-(9Z-octadecenoyl)-sn-glycero-3-phosphoethanolamine + L-serine = 1-octadecanoyl-2-(9Z-octadecenoyl)-sn-glycero-3-phospho-L-serine + ethanolamine. The catalysed reaction is 1-(1Z-octadecenyl)-2-(9Z-octadecenoyl)-sn-glycero-3-phosphoethanolamine + L-serine = 1-(1Z-octadecenyl)-2-(9Z-octadecenoyl)-sn-glycero-3-phospho-L-serine + ethanolamine. The enzyme catalyses 1-(1Z-octadecenyl)-2-(5Z,8Z,11Z,14Z- eicosatetraenoyl)-sn-glycero-3-phosphoethanolamine + L-serine = 1-(1Z-octadecenyl)-2-(5Z,8Z,11Z,14Z-eicosatetraenoyl)-sn-glycero-3-phospho-L-serine + ethanolamine. It participates in phospholipid metabolism; phosphatidylserine biosynthesis. Its function is as follows. Catalyzes a base-exchange reaction in which the polar head group of phosphatidylethanolamine (PE) or phosphatidylcholine (PC) is replaced by L-serine. Catalyzes the conversion of phosphatatidylethanolamine and does not act on phosphatidylcholine. Can utilize both phosphatidylethanolamine (PE) plasmalogen and diacyl PE as substrate and the latter is six times better utilized, indicating the importance of an ester linkage at the sn-1 position. Although it shows no sn-1 fatty acyl preference, exhibits significant preference towards docosahexaenoic acid (22:6n-3) compared with 18:1 or 20:4 at the sn-2 position. The polypeptide is Phosphatidylserine synthase 2 (PTDSS1) (Gallus gallus (Chicken)).